A 449-amino-acid polypeptide reads, in one-letter code: Signal recognition particle protein (449 aa).

Residues 109–116 (GLQGGGKT), 191–195 (DTAGR), and 249–252 (SRID) contribute to the GTP site.

This sequence belongs to the GTP-binding SRP family. SRP54 subfamily. Part of the signal recognition particle protein translocation system, which is composed of SRP and FtsY. SRP is a ribonucleoprotein composed of Ffh and a 4.5S RNA molecule.

It is found in the cytoplasm. It carries out the reaction GTP + H2O = GDP + phosphate + H(+). Its function is as follows. Involved in targeting and insertion of nascent membrane proteins into the cytoplasmic membrane. Binds to the hydrophobic signal sequence of the ribosome-nascent chain (RNC) as it emerges from the ribosomes. The SRP-RNC complex is then targeted to the cytoplasmic membrane where it interacts with the SRP receptor FtsY. Interaction with FtsY leads to the transfer of the RNC complex to the Sec translocase for insertion into the membrane, the hydrolysis of GTP by both Ffh and FtsY, and the dissociation of the SRP-FtsY complex into the individual components. This is Signal recognition particle protein from Rickettsia typhi (strain ATCC VR-144 / Wilmington).